Consider the following 128-residue polypeptide: Large ribosomal subunit protein bL20c (128 aa).

The protein belongs to the bacterial ribosomal protein bL20 family.

The protein localises to the plastid. It is found in the chloroplast. Binds directly to 23S ribosomal RNA and is necessary for the in vitro assembly process of the 50S ribosomal subunit. It is not involved in the protein synthesizing functions of that subunit. This is Large ribosomal subunit protein bL20c from Gossypium barbadense (Sea Island cotton).